Consider the following 1094-residue polypeptide: DNA polymerase delta catalytic subunit (1094 aa).

Positions 1003, 1006, 1016, and 1019 each coordinate Zn(2+). The CysA-type zinc finger occupies 1003 to 1019 (CIGCNSSIKKPPLCNHC). Residues Cys1049, Cys1052, Cys1062, and Cys1067 each coordinate [4Fe-4S] cluster. The CysB motif motif lies at 1049–1067 (CQRCQGNLHVDVICMNRDC).

The protein belongs to the DNA polymerase type-B family. Heterodimer composed of a catalytic subunit POLD and a small regulatory subunit. [4Fe-4S] cluster is required as a cofactor. It depends on Mg(2+) as a cofactor.

It is found in the nucleus. It catalyses the reaction DNA(n) + a 2'-deoxyribonucleoside 5'-triphosphate = DNA(n+1) + diphosphate. Its activity is regulated as follows. The small regulatory subunit delta and PCNA1 increase POLD catalytic activity. In terms of biological role, this polymerase possesses two enzymatic activities: DNA synthesis (polymerase) and an exonucleolytic activity that degrades single-stranded DNA in the 3'- to 5'-direction. The sequence is that of DNA polymerase delta catalytic subunit (POLD) from Plasmodium falciparum (isolate K1 / Thailand).